The following is a 357-amino-acid chain: Histidine biosynthesis bifunctional protein HisB (357 aa).

The histidinol-phosphatase stretch occupies residues 1-168 (MTPILFIDRD…GIAHALADAP (168 aa)). The active-site Nucleophile is aspartate 8. Aspartate 8, aspartate 10, and aspartate 128 together coordinate Mg(2+). The Proton donor role is filled by aspartate 10. An imidazoleglycerol-phosphate dehydratase region spans residues 169-357 (RTAVVQRDTK…TALPSTKGAL (189 aa)).

It in the N-terminal section; belongs to the histidinol-phosphatase family. The protein in the C-terminal section; belongs to the imidazoleglycerol-phosphate dehydratase family. Mg(2+) is required as a cofactor.

Its subcellular location is the cytoplasm. The catalysed reaction is D-erythro-1-(imidazol-4-yl)glycerol 3-phosphate = 3-(imidazol-4-yl)-2-oxopropyl phosphate + H2O. It carries out the reaction L-histidinol phosphate + H2O = L-histidinol + phosphate. It participates in amino-acid biosynthesis; L-histidine biosynthesis; L-histidine from 5-phospho-alpha-D-ribose 1-diphosphate: step 6/9. The protein operates within amino-acid biosynthesis; L-histidine biosynthesis; L-histidine from 5-phospho-alpha-D-ribose 1-diphosphate: step 8/9. This chain is Histidine biosynthesis bifunctional protein HisB, found in Stenotrophomonas maltophilia (strain K279a).